A 328-amino-acid polypeptide reads, in one-letter code: Ankyrin repeat domain-containing protein 2 (328 aa).

Ser36 carries the post-translational modification Phosphoserine. Residue Ser68 is modified to Phosphoserine; by PKB/AKT2. The disordered stretch occupies residues 96-116 (RDALAAAQEPPPEPEEITGPV). ANK repeat units follow at residues 116–145 (VNEE…SADT), 149–178 (FRRT…TVDF), 182–211 (LDCT…DTNV), 215–244 (LLST…DINA), and 248–277 (EGDS…DMMA). The disordered stretch occupies residues 297–328 (RHALEHPEPESEQNGLERPGSGRETPQPIPAQ).

In terms of assembly, interacts with ID3; both proteins cooperate in myoblast differentiation. Interacts with TTN/titin. Interacts (via ANK repeats) with TCAP; the interaction is direct. Interacts with TJP1 (via PDZ domains). Interacts with PML; the interaction is direct. Interacts with p53/TP53. Interacts with YBX1. Interacts with AKT2. Post-translationally, phosphorylation at Ser-68 by PKB/AKT2 in response to oxidative stress induces translocation to the nucleus and negatively regulates myoblast differentiation. As to expression, expressed by myoblasts (at protein level). Expressed in skeletal and cardiac muscles.

The protein resides in the cytoplasm. The protein localises to the myofibril. Its subcellular location is the sarcomere. It is found in the i band. It localises to the cytosol. The protein resides in the nucleus. The protein localises to the PML body. In terms of biological role, functions as a negative regulator of myocyte differentiation. May interact with both sarcoplasmic structural proteins and nuclear proteins to regulate gene expression during muscle development and in response to muscle stress. The protein is Ankyrin repeat domain-containing protein 2 (Ankrd2) of Mus musculus (Mouse).